The primary structure comprises 849 residues: Lysine-specific histone demethylase 1 homolog 1 (849 aa).

The interval 1–118 (MEEGSEAQPP…RRRRKKQFPG (118 aa)) is disordered. Composition is skewed to low complexity over residues 34–67 (GQAAAAEAMEGEAEGAAAAAGTIEGEAGYAAADA) and 89–103 (PTSSAPSATAAVDDS). Basic residues predominate over residues 106-115 (ARKRRRRKKQ). The SWIRM domain occupies 159 to 260 (ARELDAEALI…FGLAPSVISL (102 aa)). Positions 300, 302, 308, and 688 each coordinate FAD.

Belongs to the flavin monoamine oxidase family. FAD serves as cofactor.

Functionally, probable histone demethylase. The chain is Lysine-specific histone demethylase 1 homolog 1 from Oryza sativa subsp. japonica (Rice).